The primary structure comprises 177 residues: NADH-quinone oxidoreductase subunit B (177 aa).

[4Fe-4S] cluster-binding residues include C56, C57, C121, and C151.

It belongs to the complex I 20 kDa subunit family. In terms of assembly, NDH-1 is composed of 14 different subunits. Subunits NuoB, C, D, E, F, and G constitute the peripheral sector of the complex. [4Fe-4S] cluster serves as cofactor.

Its subcellular location is the cell inner membrane. It carries out the reaction a quinone + NADH + 5 H(+)(in) = a quinol + NAD(+) + 4 H(+)(out). In terms of biological role, NDH-1 shuttles electrons from NADH, via FMN and iron-sulfur (Fe-S) centers, to quinones in the respiratory chain. Couples the redox reaction to proton translocation (for every two electrons transferred, four hydrogen ions are translocated across the cytoplasmic membrane), and thus conserves the redox energy in a proton gradient. The polypeptide is NADH-quinone oxidoreductase subunit B (Dinoroseobacter shibae (strain DSM 16493 / NCIMB 14021 / DFL 12)).